The following is a 256-amino-acid chain: Ubiquinone/menaquinone biosynthesis C-methyltransferase UbiE (256 aa).

S-adenosyl-L-methionine is bound by residues T79, D100, and 128 to 129 (DA).

It belongs to the class I-like SAM-binding methyltransferase superfamily. MenG/UbiE family.

The enzyme catalyses a 2-demethylmenaquinol + S-adenosyl-L-methionine = a menaquinol + S-adenosyl-L-homocysteine + H(+). It catalyses the reaction a 2-methoxy-6-(all-trans-polyprenyl)benzene-1,4-diol + S-adenosyl-L-methionine = a 5-methoxy-2-methyl-3-(all-trans-polyprenyl)benzene-1,4-diol + S-adenosyl-L-homocysteine + H(+). It participates in quinol/quinone metabolism; menaquinone biosynthesis; menaquinol from 1,4-dihydroxy-2-naphthoate: step 2/2. It functions in the pathway cofactor biosynthesis; ubiquinone biosynthesis. Methyltransferase required for the conversion of demethylmenaquinol (DMKH2) to menaquinol (MKH2) and the conversion of 2-polyprenyl-6-methoxy-1,4-benzoquinol (DDMQH2) to 2-polyprenyl-3-methyl-6-methoxy-1,4-benzoquinol (DMQH2). This chain is Ubiquinone/menaquinone biosynthesis C-methyltransferase UbiE, found in Pseudomonas syringae pv. tomato (strain ATCC BAA-871 / DC3000).